The chain runs to 234 residues: MLFSPPLQRATLIQRYKRFLADVITPDGTTLTLHCPNTGAMTGCATPGDTVWYSTSENTKRKYPHTWELTETQFGAFICVNTLRANQLTKEAIQENRLPALEGYNILKSEVKYGAERSRIDFMLQADFRPDCYIEVKSVTLAEKENGYFPDAITERGQKHLRELMGVAAAGHRAVVVFAVLHSAITRFSPARHIDIKYAQLLSEAQNKGVEVLAYKAELSAQKMELNEPVPITL.

A DNA-binding region (H-T-H motif) is located at residues 201 to 220; sequence LLSEAQNKGVEVLAYKAELS.

The protein belongs to the SfsA family.

Its function is as follows. Binds to DNA non-specifically. Could be a regulatory factor involved in maltose metabolism. This chain is Sugar fermentation stimulation protein A, found in Salmonella agona (strain SL483).